A 178-amino-acid polypeptide reads, in one-letter code: Ribulose bisphosphate carboxylase small subunit, chloroplastic 4 (178 aa).

The transit peptide at 1 to 54 (MASISSTVATVSRAAPAQANMVAPFTGLKSNAAFPATKKANDFSTLPSNGGRVQ) directs the protein to the chloroplast.

Belongs to the RuBisCO small chain family. In terms of assembly, heterohexadecamer of 8 large and 8 small subunits.

It localises to the plastid. The protein localises to the chloroplast. RuBisCO catalyzes two reactions: the carboxylation of D-ribulose 1,5-bisphosphate, the primary event in carbon dioxide fixation, as well as the oxidative fragmentation of the pentose substrate. Both reactions occur simultaneously and in competition at the same active site. Although the small subunit is not catalytic it is essential for maximal activity. The sequence is that of Ribulose bisphosphate carboxylase small subunit, chloroplastic 4 from Flaveria pringlei.